A 364-amino-acid polypeptide reads, in one-letter code: BTB/POZ and TAZ domain-containing protein 2 (364 aa).

One can recognise a BTB domain in the interval 34 to 106 (SDVEIVTSDN…LYSSSLTEDE (73 aa)). The Nuclear localization signal signature appears at 203–212 (RKKRRRRHRK). The segment at 215–316 (DLYMQLSEAM…PDSCRVPLCR (102 aa)) adopts a TAZ-type zinc-finger fold. The tract at residues 327-350 (KMGEDTKWKLLVTRVVSAKAMTSL) is caM-binding.

In terms of assembly, interacts with CUL3A. Interacts with GTE11/BET10 through the BTB domain. In terms of tissue distribution, preferentially expressed in young leaves and roots.

The protein resides in the nucleus. The protein localises to the cytoplasm. It functions in the pathway protein modification; protein ubiquitination. May act as a substrate-specific adapter of an E3 ubiquitin-protein ligase complex (CUL3-RBX1-BTB) which mediates the ubiquitination and subsequent proteasomal degradation of target proteins. Plays a key role as a component of the TAC1-mediated telomerase activation pathway certainly by targeting a telomerase repressor to degradation. Seems to occupy an integral position in a complex signaling network that perceives, integrates, and responds to multiple, and sometimes competing, signals. Enhances responses to auxin in postgermination and vegetative development. Also negatively regulates ABA- and sugar-mediated inhibition of the germination. Essential for female and male gametophyte development. This is BTB/POZ and TAZ domain-containing protein 2 (BT2) from Arabidopsis thaliana (Mouse-ear cress).